The chain runs to 339 residues: MIFIDACFRKETPYTPIWMMRQAGRYLREYQESRKKAGSFLELCKNSDLATEVTLQPVEILGVDAAILFSDILVVPLEMGLNLEFIPKKGPHFLETITDLKSVENLKVGAYKQLNYVYDTISQTRQKLSKEKALIGFCGSPWTLATYMIEGEGSKSYAKSKKMLYSEPEVLKALLEKLSLELIEYLSLQIQAGVNAVMIFDSWASALEKEAYLKFSWDYLKKISKELKKRYAHIPVILFPKGIGAYLDSIDGEFDVFGVDWGTPLTAAKKILGGKYVLQGNLEPTRLYDKNALEEGVEGILKVMGNQGHIFNLGHGMLPDLPRENAKYLVQLVHAKTRR.

Substrate is bound by residues 21–25 (RQAGR), Asp71, Tyr147, Ser202, and His315.

It belongs to the uroporphyrinogen decarboxylase family. Homodimer.

It localises to the cytoplasm. The catalysed reaction is uroporphyrinogen III + 4 H(+) = coproporphyrinogen III + 4 CO2. Its pathway is porphyrin-containing compound metabolism; protoporphyrin-IX biosynthesis; coproporphyrinogen-III from 5-aminolevulinate: step 4/4. In terms of biological role, catalyzes the decarboxylation of four acetate groups of uroporphyrinogen-III to yield coproporphyrinogen-III. This Helicobacter pylori (strain HPAG1) protein is Uroporphyrinogen decarboxylase.